Consider the following 452-residue polypeptide: Transcription factor ETV6 (452 aa).

Positions M1–I10 are enriched in polar residues. The segment at M1–S30 is disordered. At K11 the chain carries N6-acetyllysine; alternate. Residue K11 forms a Glycyl lysine isopeptide (Lys-Gly) (interchain with G-Cter in SUMO2); alternate linkage. At T18 the chain carries Phosphothreonine. S22 is subject to Phosphoserine. Residues A40–R124 enclose the PNT domain. The tract at residues V158–S262 is disordered. S213 and S238 each carry phosphoserine. The span at Q230–E250 shows a compositional bias: polar residues. Residue S257 is modified to Phosphoserine; by MAPK14. K288 is covalently cross-linked (Glycyl lysine isopeptide (Lys-Gly) (interchain with G-Cter in SUMO2)). K302 bears the N6-acetyllysine; alternate mark. K302 is covalently cross-linked (Glycyl lysine isopeptide (Lys-Gly) (interchain with G-Cter in SUMO2); alternate). Residue S323 is modified to Phosphoserine. Positions R339–M420 form a DNA-binding region, ETS. Residues K403 and K421 each participate in a glycyl lysine isopeptide (Lys-Gly) (interchain with G-Cter in SUMO2) cross-link.

Belongs to the ETS family. In terms of assembly, can form homodimers or heterodimers with TEL2 or FLI1. Interacts with L3MBTL1 and HDAC9. Phosphorylation of Ser-257 by MAPK14 (p38) inhibits ETV6 transcriptional repression. In terms of tissue distribution, ubiquitous.

It is found in the nucleus. Transcriptional repressor; binds to the DNA sequence 5'-CCGGAAGT-3'. Plays a role in hematopoiesis and malignant transformation. The chain is Transcription factor ETV6 (ETV6) from Homo sapiens (Human).